Here is a 436-residue protein sequence, read N- to C-terminus: 3-ketoacyl-CoA thiolase (436 aa).

Cys99 serves as the catalytic Acyl-thioester intermediate. Active-site proton acceptor residues include His392 and Cys422.

Belongs to the thiolase-like superfamily. Thiolase family. In terms of assembly, heterotetramer of two alpha chains (FadJ) and two beta chains (FadI).

The protein resides in the cytoplasm. It carries out the reaction an acyl-CoA + acetyl-CoA = a 3-oxoacyl-CoA + CoA. The protein operates within lipid metabolism; fatty acid beta-oxidation. Its function is as follows. Catalyzes the final step of fatty acid oxidation in which acetyl-CoA is released and the CoA ester of a fatty acid two carbons shorter is formed. In Escherichia coli O1:K1 / APEC, this protein is 3-ketoacyl-CoA thiolase.